We begin with the raw amino-acid sequence, 424 residues long: UPF0415 protein C7orf25 homolog (424 aa).

The protein belongs to the UPF0415 family.

The protein is UPF0415 protein C7orf25 homolog of Xenopus tropicalis (Western clawed frog).